The chain runs to 274 residues: Large ribosomal subunit protein uL2 (274 aa).

Disordered stretches follow at residues 34-54 and 224-261; these read LEKKSKSGGRNNNGRITTRHI and VAMNPVDHPHGGGEGRTSGGRHPVSPWGFPTKGAKTRA.

The protein belongs to the universal ribosomal protein uL2 family. As to quaternary structure, part of the 50S ribosomal subunit. Forms a bridge to the 30S subunit in the 70S ribosome.

Functionally, one of the primary rRNA binding proteins. Required for association of the 30S and 50S subunits to form the 70S ribosome, for tRNA binding and peptide bond formation. It has been suggested to have peptidyltransferase activity; this is somewhat controversial. Makes several contacts with the 16S rRNA in the 70S ribosome. This Ectopseudomonas mendocina (strain ymp) (Pseudomonas mendocina) protein is Large ribosomal subunit protein uL2.